The sequence spans 259 residues: 3-deoxy-manno-octulosonate cytidylyltransferase (259 aa).

Belongs to the KdsB family.

It localises to the cytoplasm. The catalysed reaction is 3-deoxy-alpha-D-manno-oct-2-ulosonate + CTP = CMP-3-deoxy-beta-D-manno-octulosonate + diphosphate. The protein operates within nucleotide-sugar biosynthesis; CMP-3-deoxy-D-manno-octulosonate biosynthesis; CMP-3-deoxy-D-manno-octulosonate from 3-deoxy-D-manno-octulosonate and CTP: step 1/1. Its pathway is bacterial outer membrane biogenesis; lipopolysaccharide biosynthesis. Activates KDO (a required 8-carbon sugar) for incorporation into bacterial lipopolysaccharide in Gram-negative bacteria. The sequence is that of 3-deoxy-manno-octulosonate cytidylyltransferase from Nitrosococcus oceani (strain ATCC 19707 / BCRC 17464 / JCM 30415 / NCIMB 11848 / C-107).